The primary structure comprises 368 residues: E3 ubiquitin-protein ligase E3D (368 aa).

Ala-2 carries the post-translational modification N-acetylalanine. Positions 129–159 match the BRAT1-like motif motif; it reads PLPSENWSALVGEWCCHPDPFANRPLHPREN. Cys-144 contributes to the Zn(2+) binding site. Residues 214 to 236 are interaction with UBE2C; it reads RPSEGSFPNIPRSQFLQSIIAQC. The interval 332–368 is HECT-like; sequence LPSATCLELLLILSRNNASLPLSLRQMNSFQVAFLKM.

Interacts with UBE2C/UbcH10 (E2 ubiquitin-conjugating enzyme). In vitro, interacts with cyclin-B. Post-translationally, ubiquitinated by UBCH10 (E2 ubiquitin-conjugating enzyme).

It is found in the cytoplasm. It catalyses the reaction S-ubiquitinyl-[E2 ubiquitin-conjugating enzyme]-L-cysteine + [acceptor protein]-L-lysine = [E2 ubiquitin-conjugating enzyme]-L-cysteine + N(6)-ubiquitinyl-[acceptor protein]-L-lysine.. Its pathway is protein modification; protein ubiquitination. E3 ubiquitin-protein ligase which accepts ubiquitin from specific E2 ubiquitin-conjugating enzymes, and transfers it to substrates, generally promoting their degradation by the proteasome. Independently of its E3 ubiquitin-protein ligase activity, acts as an inhibitor of CPSF3 endonuclease activity by blocking CPSF3 active site. This is E3 ubiquitin-protein ligase E3D (Ube3d) from Mus musculus (Mouse).